An 827-amino-acid chain; its full sequence is Histone acetyltransferase MOF (827 aa).

Disordered stretches follow at residues 1 to 190 (MSEA…SDTV), 237 to 276 (QLGLPLAAPPPPPPPPAAEQVPETPASPTDDGEEPPAVYL), 288 to 309 (STPGLPTRLAPRDPRQRNMPPP), and 324 to 360 (EAISDDSSETSSSDDDEEEEEDEDDALTMEHDNTSRE). A compositionally biased stretch (acidic residues) spans 19–30 (PIEEEHEPEQEP). A compositionally biased stretch (polar residues) spans 55-69 (LDVSGSDQSAEQSLD). A compositionally biased stretch (low complexity) spans 103–116 (SSTSTSSTRSSSSS). The span at 121 to 133 (VSEAEEAPPEPEP) shows a compositional bias: acidic residues. Positions 141 to 150 (QEEKKEDGQD) are enriched in basic and acidic residues. Residues 176 to 186 (DQEIETEDEPS) are compositionally biased toward acidic residues. Residues 243 to 253 (AAPPPPPPPPA) are compositionally biased toward pro residues. Residues 326 to 350 (ISDDSSETSSSDDDEEEEEDEDDAL) are compositionally biased toward acidic residues. Lys372 participates in a covalent cross-link: Glycyl lysine isopeptide (Lys-Gly) (interchain with G-Cter in ubiquitin). The region spanning 382–433 (IYFIRREDGTVHRGQVLQSRTTENAAAPDEYYVHYVGLNRRLDGWVGRHRIS) is the Tudor-knot domain. Glycyl lysine isopeptide (Lys-Gly) (interchain with G-Cter in ubiquitin) cross-links involve residues Lys483, Lys532, and Lys539. The 276-residue stretch at 538–813 (TKIKYIDKLQ…IDTDYLVWSP (276 aa)) folds into the MYST-type HAT domain. The C2HC MYST-type zinc finger occupies 571–596 (LYVCEYCLKYMRFRSSYAYHLHECDR). Zn(2+)-binding residues include Cys574, Cys577, His590, and Cys594. N6-acetyllysine; by autocatalysis is present on Lys638. Acetyl-CoA is bound by residues Ile681, Arg689, Lys690, Gly691, Gly693, and Lys694. Glu714 (proton donor/acceptor) is an active-site residue. A Glycyl lysine isopeptide (Lys-Gly) (interchain with G-Cter in ubiquitin) cross-link involves residue Lys715. Positions 718 and 727 each coordinate acetyl-CoA. Residue Lys749 forms a Glycyl lysine isopeptide (Lys-Gly) (interchain with G-Cter in ubiquitin) linkage. Acetyl-CoA is bound at residue Tyr774. Residues Lys776, Lys798, and Lys801 each participate in a glycyl lysine isopeptide (Lys-Gly) (interchain with G-Cter in ubiquitin) cross-link. Lys798 lines the acetyl-CoA pocket.

It belongs to the MYST (SAS/MOZ) family. Component of the male-specific lethal (MSL) histone acetyltransferase complex, composed of mof, mle, msl-1, msl-2 and msl-3 proteins, as well as roX1 and roX2 non-coding RNAs. Component of a maternal MSL subcomplex composed of mof, msl-1 and msl-3. Component of the non-specific lethal (NLS) histone acetyltransferase complex at least composed of mof, nls1, dgt1/NSL2, Rcd1/NSL3, Rcd5/MCRS2, MBD-R2 and wds. In males, interacts with nucleoporin Mgtor. Autoacetylation at Lys-638 is required for binding histone H4 with high affinity and for proper function. In terms of processing, ubiquitinated by msl-2.

It localises to the nucleus. The protein localises to the chromosome. It catalyses the reaction L-lysyl-[histone] + acetyl-CoA = N(6)-acetyl-L-lysyl-[histone] + CoA + H(+). Its function is as follows. Histone acetyltransferase that catalyzes the formation of the majority of histone H4 acetylation at 'Lys-16' (H4K16ac), an epigenetic mark that prevents chromatin compaction and constitutes the only acetylation mark intergenerationally transmitted. Catalytic component of the male-specific lethal (MSL) complex, a multiprotein complex essential for elevating transcription of the single X chromosome in the male (X chromosome dosage compensation). The MSL complex specifically associates with the single X chromosome in males and mediates formation of H4K16ac, promoting a two-fold activation of X chromosome. Dosage compensation ensures that males with a single X chromosome have the same amount of most X-linked gene products as females with two X chromosomes. In oocytes, mof is also part of a maternal MSL subcomplex that mediates H4K16ac deposition for intergenerational transmission: H4K16ac prepares the chromatin landscape for establishment of nucleosome accessibility and poises genes for future activation. H4K16ac constitutes the only acetylation mark maintained from oocytes to fertilized embryos. Mof also constitutes the catalytic component of the non-specific lethal (NLS) complex, which promotes expression of housekeeping genes on X chromosome and autosomes. The NSL complex promotes strong expression of housekeeping genes compared to the two-fold expression mediated by the MSL complex on X chromosome, suggesting that the activation potential of mof is constrained in the context of dosage compensation. The chain is Histone acetyltransferase MOF from Drosophila melanogaster (Fruit fly).